Consider the following 600-residue polypeptide: Elongation factor 4 (600 aa).

The tr-type G domain maps to 6-188 (QFIRNFSIIA…QITKQIPSPK (183 aa)). Residues 18 to 23 (DHGKST) and 135 to 138 (NKID) contribute to the GTP site.

This sequence belongs to the TRAFAC class translation factor GTPase superfamily. Classic translation factor GTPase family. LepA subfamily.

It is found in the cell inner membrane. It carries out the reaction GTP + H2O = GDP + phosphate + H(+). Its function is as follows. Required for accurate and efficient protein synthesis under certain stress conditions. May act as a fidelity factor of the translation reaction, by catalyzing a one-codon backward translocation of tRNAs on improperly translocated ribosomes. Back-translocation proceeds from a post-translocation (POST) complex to a pre-translocation (PRE) complex, thus giving elongation factor G a second chance to translocate the tRNAs correctly. Binds to ribosomes in a GTP-dependent manner. The chain is Elongation factor 4 from Leptospira interrogans serogroup Icterohaemorrhagiae serovar copenhageni (strain Fiocruz L1-130).